The sequence spans 514 residues: 2,3-bisphosphoglycerate-independent phosphoglycerate mutase (514 aa).

Residues Asp-14 and Ser-64 each contribute to the Mn(2+) site. Ser-64 functions as the Phosphoserine intermediate in the catalytic mechanism. Residues His-125, 155–156 (RD), Arg-187, Arg-193, 263–266 (RADR), and Lys-336 contribute to the substrate site. The Mn(2+) site is built by Asp-403, His-407, Asp-444, His-445, and His-463.

It belongs to the BPG-independent phosphoglycerate mutase family. In terms of assembly, monomer. Mn(2+) serves as cofactor.

The catalysed reaction is (2R)-2-phosphoglycerate = (2R)-3-phosphoglycerate. Its pathway is carbohydrate degradation; glycolysis; pyruvate from D-glyceraldehyde 3-phosphate: step 3/5. Functionally, catalyzes the interconversion of 2-phosphoglycerate and 3-phosphoglycerate. The polypeptide is 2,3-bisphosphoglycerate-independent phosphoglycerate mutase (Salmonella choleraesuis (strain SC-B67)).